The following is a 129-amino-acid chain: Small ribosomal subunit protein uS11 (129 aa).

Positions 109–129 are disordered; it reads VDDTPVPHNGCRPKKKFRKAS. A compositionally biased stretch (basic residues) spans 119 to 129; that stretch reads CRPKKKFRKAS.

Belongs to the universal ribosomal protein uS11 family. Part of the 30S ribosomal subunit. Interacts with proteins S7 and S18. Binds to the C-terminus of IF-3; however exactly how IF-3 interacts with the 30S subunit is unclear.

In terms of biological role, located on the upper part of the platform of the 30S subunit, where it bridges several disparate RNA helices of the 16S rRNA. Forms part of the Shine-Dalgarno cleft in the 70S ribosome. The polypeptide is Small ribosomal subunit protein uS11 (rpsK) (Thermus thermophilus (strain ATCC BAA-163 / DSM 7039 / HB27)).